We begin with the raw amino-acid sequence, 1633 residues long: D-lysergyl-peptide-synthetase subunit 3 (1633 aa).

An adenylation (A) domain region spans residues 80–483 (FRQRCDLHPD…GRKDSQIKIR (404 aa)). Residues 622–691 (EEHRLQRMYS…RLKDLARKAS (70 aa)) enclose the Carrier domain. O-(pantetheine 4'-phosphoryl)serine is present on Ser-654. The tract at residues 836 to 1127 (PLVRMKLVEG…ILGQIHGKEA (292 aa)) is condensation (C) domain. The tract at residues 1256–1483 (VTGASGFIGT…EYNSSAGSEW (228 aa)) is reductase (R) domain.

The protein belongs to the NRP synthetase family.

It functions in the pathway alkaloid biosynthesis; ergot alkaloid biosynthesis. Functionally, D-lysergyl-peptide-synthetase subunit 3; part of the gene cluster that mediates the biosynthesis of fungal ergot alkaloid. DmaW catalyzes the first step of ergot alkaloid biosynthesis by condensing dimethylallyl diphosphate (DMAP) and tryptophan to form 4-dimethylallyl-L-tryptophan. The second step is catalyzed by the methyltransferase easF that methylates 4-dimethylallyl-L-tryptophan in the presence of S-adenosyl-L-methionine, resulting in the formation of 4-dimethylallyl-L-abrine. The catalase easC and the FAD-dependent oxidoreductase easE then transform 4-dimethylallyl-L-abrine to chanoclavine-I which is further oxidized by easD in the presence of NAD(+), resulting in the formation of chanoclavine-I aldehyde. Agroclavine dehydrogenase easG then mediates the conversion of chanoclavine-I aldehyde to agroclavine via a non-enzymatic adduct reaction: the substrate is an iminium intermediate that is formed spontaneously from chanoclavine-I aldehyde in the presence of glutathione. The presence of easA is not required to complete this reaction. Further conversion of agroclavine to paspalic acid is a two-step process involving oxidation of agroclavine to elymoclavine and of elymoclavine to paspalic acid, the second step being performed by the elymoclavine oxidase cloA. Paspalic acid is then further converted to D-lysergic acid. Ergopeptines are assembled from D-lysergic acid and three different amino acids by the D-lysergyl-peptide-synthetases composed each of a monomudular and a trimodular nonribosomal peptide synthetase subunit. LpsB and lpsC encode the monomodular subunits responsible for D-lysergic acid activation and incorporation into the ergopeptine backbone. LpsA1 and A2 subunits encode the trimodular nonribosomal peptide synthetase assembling the tripeptide portion of ergopeptines. LpsA1 is responsible for formation of the major ergopeptine, ergotamine, and lpsA2 for alpha-ergocryptine, the minor ergopeptine of the total alkaloid mixture elaborated by C.purpurea. D-lysergyl-tripeptides are assembled by the nonribosomal peptide synthetases and released as N-(D-lysergyl-aminoacyl)-lactams. Cyclolization of the D-lysergyl-tripeptides is performed by the Fe(2+)/2-ketoglutarate-dependent dioxygenase easH which introduces a hydroxyl group into N-(D-lysergyl-aminoacyl)-lactam at alpha-C of the aminoacyl residue followed by spontaneous condensation with the terminal lactam carbonyl group. In Claviceps purpurea (Ergot fungus), this protein is D-lysergyl-peptide-synthetase subunit 3.